We begin with the raw amino-acid sequence, 1411 residues long: DNA-directed RNA polymerase subunit beta' (1411 aa).

4 residues coordinate Zn(2+): Cys70, Cys72, Cys85, and Cys88. Mg(2+) is bound by residues Asp460, Asp462, and Asp464. Positions 814, 889, 896, and 899 each coordinate Zn(2+). The segment covering 1387 to 1399 (RSTSSGTEITSPS) has biased composition (polar residues). A disordered region spans residues 1387–1411 (RSTSSGTEITSPSKDAIPLGSKVGF).

The protein belongs to the RNA polymerase beta' chain family. As to quaternary structure, the RNAP catalytic core consists of 2 alpha, 1 beta, 1 beta' and 1 omega subunit. When a sigma factor is associated with the core the holoenzyme is formed, which can initiate transcription. Mg(2+) serves as cofactor. Zn(2+) is required as a cofactor.

It catalyses the reaction RNA(n) + a ribonucleoside 5'-triphosphate = RNA(n+1) + diphosphate. Its function is as follows. DNA-dependent RNA polymerase catalyzes the transcription of DNA into RNA using the four ribonucleoside triphosphates as substrates. The chain is DNA-directed RNA polymerase subunit beta' from Xylella fastidiosa (strain M12).